A 1098-amino-acid polypeptide reads, in one-letter code: PAN2-PAN3 deadenylation complex catalytic subunit PAN2 (1098 aa).

WD repeat units lie at residues 19–58 (ASKDPVTSLLFDSVHNLLWCGDSSGSARSFTPNAGYPFQL), 150–190 (TGFD…SVKS), 253–293 (PFPN…KLNV), and 300–338 (PASPGISRMEISDNGEYICCSEGRSLHLWSFTSDTNFVN). Residues 340 to 466 (PAPLEEQDIP…SIFHLKSPTS (127 aa)) form a linker region. The segment at 417 to 442 (RNISQPYQSLREPPGSNSNAPRFISE) is disordered. The USP domain maps to 466-839 (SVPHCYSRLQ…KPVIIVYSEP (374 aa)). In terms of domain architecture, Exonuclease spans 894–1067 (IAIDAEFVVS…EDAYTALMLF (174 aa)). 4 residues coordinate a divalent metal cation: Asp-897, Glu-899, Asp-1006, and Asp-1059.

This sequence belongs to the peptidase C19 family. PAN2 subfamily. Forms a heterotrimer with an asymmetric homodimer of the regulatory subunit PAN3 to form the poly(A)-nuclease (PAN) deadenylation complex. A divalent metal cation serves as cofactor.

The protein resides in the cytoplasm. The catalysed reaction is Exonucleolytic cleavage of poly(A) to 5'-AMP.. Its activity is regulated as follows. Positively regulated by the regulatory subunit PAN3. Its function is as follows. Catalytic subunit of the poly(A)-nuclease (PAN) deadenylation complex, one of two cytoplasmic mRNA deadenylases involved in mRNA turnover. PAN specifically shortens poly(A) tails of RNA and the activity is stimulated by poly(A)-binding protein PAB1. PAN deadenylation is followed by rapid degradation of the shortened mRNA tails by the CCR4-NOT complex. Deadenylated mRNAs are then degraded by two alternative mechanisms, namely exosome-mediated 3'-5' exonucleolytic degradation, or deadenylation-dependent mRNA decaping and subsequent 5'-3' exonucleolytic degradation by XRN1. May also be involved in post-transcriptional maturation of mRNA poly(A) tails. This is PAN2-PAN3 deadenylation complex catalytic subunit PAN2 from Meyerozyma guilliermondii (strain ATCC 6260 / CBS 566 / DSM 6381 / JCM 1539 / NBRC 10279 / NRRL Y-324) (Yeast).